A 557-amino-acid polypeptide reads, in one-letter code: Dihydroxy-acid dehydratase (557 aa).

C47 provides a ligand contact to [2Fe-2S] cluster. D79 lines the Mg(2+) pocket. C120 contacts [2Fe-2S] cluster. Mg(2+)-binding residues include D121 and K122. K122 is modified (N6-carboxylysine). Residue C192 coordinates [2Fe-2S] cluster. A Mg(2+)-binding site is contributed by E444. Catalysis depends on S470, which acts as the Proton acceptor.

It belongs to the IlvD/Edd family. Homodimer. It depends on [2Fe-2S] cluster as a cofactor. The cofactor is Mg(2+).

It catalyses the reaction (2R)-2,3-dihydroxy-3-methylbutanoate = 3-methyl-2-oxobutanoate + H2O. It carries out the reaction (2R,3R)-2,3-dihydroxy-3-methylpentanoate = (S)-3-methyl-2-oxopentanoate + H2O. It functions in the pathway amino-acid biosynthesis; L-isoleucine biosynthesis; L-isoleucine from 2-oxobutanoate: step 3/4. Its pathway is amino-acid biosynthesis; L-valine biosynthesis; L-valine from pyruvate: step 3/4. Its function is as follows. Functions in the biosynthesis of branched-chain amino acids. Catalyzes the dehydration of (2R,3R)-2,3-dihydroxy-3-methylpentanoate (2,3-dihydroxy-3-methylvalerate) into 2-oxo-3-methylpentanoate (2-oxo-3-methylvalerate) and of (2R)-2,3-dihydroxy-3-methylbutanoate (2,3-dihydroxyisovalerate) into 2-oxo-3-methylbutanoate (2-oxoisovalerate), the penultimate precursor to L-isoleucine and L-valine, respectively. This Parasynechococcus marenigrum (strain WH8102) protein is Dihydroxy-acid dehydratase.